A 359-amino-acid chain; its full sequence is Chorismate synthase (359 aa).

Residue arginine 47 coordinates NADP(+). FMN contacts are provided by residues 123 to 125 (RSS), glycine 283, 298 to 302 (KPTSS), and arginine 326.

This sequence belongs to the chorismate synthase family. Homotetramer. FMNH2 serves as cofactor.

It carries out the reaction 5-O-(1-carboxyvinyl)-3-phosphoshikimate = chorismate + phosphate. The protein operates within metabolic intermediate biosynthesis; chorismate biosynthesis; chorismate from D-erythrose 4-phosphate and phosphoenolpyruvate: step 7/7. In terms of biological role, catalyzes the anti-1,4-elimination of the C-3 phosphate and the C-6 proR hydrogen from 5-enolpyruvylshikimate-3-phosphate (EPSP) to yield chorismate, which is the branch point compound that serves as the starting substrate for the three terminal pathways of aromatic amino acid biosynthesis. This reaction introduces a second double bond into the aromatic ring system. This is Chorismate synthase from Chlamydia pneumoniae (Chlamydophila pneumoniae).